The following is a 414-amino-acid chain: Serine/threonine transporter SstT (414 aa).

8 consecutive transmembrane segments (helical) span residues 16 to 36, 46 to 66, 84 to 104, 143 to 163, 180 to 200, 219 to 239, 300 to 320, and 332 to 352; these read GSLV…AWIS, LGTL…LMLV, ILFL…VFSF, ALLN…GFAL, AVTF…FGLV, LVVL…LLVF, MAGA…TLGV, and VVAS…LLLI.

It belongs to the dicarboxylate/amino acid:cation symporter (DAACS) (TC 2.A.23) family.

It localises to the cell inner membrane. It catalyses the reaction L-serine(in) + Na(+)(in) = L-serine(out) + Na(+)(out). The catalysed reaction is L-threonine(in) + Na(+)(in) = L-threonine(out) + Na(+)(out). Its function is as follows. Involved in the import of serine and threonine into the cell, with the concomitant import of sodium (symport system). This chain is Serine/threonine transporter SstT, found in Salmonella heidelberg (strain SL476).